Here is a 655-residue protein sequence, read N- to C-terminus: Protein nipi-3 (655 aa).

Residues 1–35 (MARTKCKTKTVANPRTGVRKTAKDLSEPVRQDAVS) are disordered. Residues 21–35 (TAKDLSEPVRQDAVS) show a composition bias toward basic and acidic residues. A Protein kinase domain is found at 200 to 470 (IGIFVIYGTG…NQVNGDFPEI (271 aa)). Residues 206–214 (YGTGLVTRA) and Lys235 each bind ATP.

This sequence belongs to the protein kinase superfamily. CAMK Ser/Thr protein kinase family. May interact with transcription factor cebp-1 (via N-terminus). As to expression, expressed in epidermis, pharynx, intestine, a subset of head neurons and motoneurons.

The protein localises to the nucleus. Adapter protein that regulates different signaling pathways. Required for larval development and viability. Involved in negatively modulating pmk-1 p38/MAPK signaling. Involved in innate immunity, acting either in a manner dependent upon, or independent of, the pmk-1 or pmk-3 p38/MAPK pathways. Has a protective role in response to infection by the Gram-negative bacterium P.aeruginosa, acting by negatively modulating expression of cebp-1, and regulating the pmk-1 p38/MAPK pathway, leading to activation of transcription factor skn-1. Required to prevent P.aeruginosa toxin ToxA-mediated lethality, probably acting via modulating the effects of translational inhibition caused by the toxin. By regulating the up-regulation in the epidermis of antimicrobial peptides nlp-29 and nlp-31, plays a role in resistance to fungal infection. This is Protein nipi-3 from Caenorhabditis elegans.